A 2890-amino-acid chain; its full sequence is Bifunctional DNA-directed RNA polymerase subunit beta-beta' (2890 aa).

Residues 1–1377 (MSKKIPLKNR…DINIFGDEMD (1377 aa)) form a DNA-directed RNA polymerase subunit beta region. A DNA-directed RNA polymerase subunit beta' region spans residues 1384–2890 (PIVIKEDDRP…LRTIEDSPKI (1507 aa)). The Zn(2+) site is built by Cys-1449, Cys-1451, Cys-1465, and Cys-1468. The Mg(2+) site is built by Asp-1849, Asp-1851, and Asp-1853. 4 residues coordinate Zn(2+): Cys-2179, Cys-2253, Cys-2260, and Cys-2263.

The protein in the N-terminal section; belongs to the RNA polymerase beta chain family. This sequence in the C-terminal section; belongs to the RNA polymerase beta' chain family. As to quaternary structure, the RNAP catalytic core consists of 2 alpha, 1 beta/beta' and 1 omega subunit. When a sigma factor is associated with the core the holoenzyme is formed, which can initiate transcription. It depends on Mg(2+) as a cofactor. Zn(2+) is required as a cofactor.

It catalyses the reaction RNA(n) + a ribonucleoside 5'-triphosphate = RNA(n+1) + diphosphate. Its function is as follows. DNA-dependent RNA polymerase catalyzes the transcription of DNA into RNA using the four ribonucleoside triphosphates as substrates. The protein is Bifunctional DNA-directed RNA polymerase subunit beta-beta' (rpoBC) of Helicobacter acinonychis (strain Sheeba).